The following is a 2260-amino-acid chain: Reducing polyketide synthase pksF (2260 aa).

The region spanning 20–445 (VEPIAIVGFG…GTNAHVVLDD (426 aa)) is the Ketosynthase family 3 (KS3) domain. Residues C194, H329, and H368 each act as for beta-ketoacyl synthase activity in the active site. The segment at 598–933 (FVFTGQGAQW…ECAGKLHTIG (336 aa)) is malonyl-CoA:ACP transacylase (MAT) domain. S689 acts as the For malonyltransferase activity in catalysis. Residues 984–1121 (HELLGSRTPD…GYVAIEYDDR (138 aa)) form an N-terminal hotdog fold region. The interval 984–1281 (HELLGSRTPD…FRNKLFSITA (298 aa)) is dehydratase (DH) domain. The 323-residue stretch at 984-1306 (HELLGSRTPD…TSTIGRNSPS (323 aa)) folds into the PKS/mFAS DH domain. H1016 acts as the Proton acceptor; for dehydratase activity in catalysis. The segment at 1150 to 1306 (RIAIDSADIY…TSTIGRNSPS (157 aa)) is C-terminal hotdog fold. D1216 functions as the Proton donor; for dehydratase activity in the catalytic mechanism. Residues 1544 to 1859 (GILKTLHYEQ…DVDVVEKIVI (316 aa)) form an enoylreductase (ER) domain region. The tract at residues 1882–2104 (PDASYLIAGA…LRFCCDPDRV (223 aa)) is ketoreductase (KR) domain. The Carrier domain occupies 2174–2251 (QATDIVVEAI…LLAVKVAGKS (78 aa)). S2211 carries the O-(pantetheine 4'-phosphoryl)serine modification.

Pantetheine 4'-phosphate serves as cofactor.

Its function is as follows. Reducing polyketide synthase that catalyzes the formation of a C22 intermediate attached to the ACP. Release by intramolecular hydrolysis by the enolized delta-carbonyl would give the pyrone product aslanipyrone. Alternatively, KR-mediated reduction of the beta-carbonyl of the C22 intermediate would form a beta-hydroxy thioester intermediate, which could be a substrate for a further KS-mediated condensation of an additional C2 unit to form a C24 intermediate, which cyclizes by aldol condensation followed by decarboxylation to form aslaniol. Neither aslanipyrone, aslaniol, nor their derivatives have been detected in A.solani, probably due to a low abundance and/or extensive post-PKS modification. It is assumed that the branching point from C22 to C24 is the result of KR activity on the C22 intermediate anchored to the ACP. The protein is Reducing polyketide synthase pksF of Alternaria solani.